Here is a 289-residue protein sequence, read N- to C-terminus: Cell division protein ZipA (289 aa).

M1 is a topological domain (periplasmic). A helical transmembrane segment spans residues D2 to F22. The Cytoplasmic portion of the chain corresponds to D23–R289. Residues R66 to A141 form a disordered region. Residues R81–D99 are compositionally biased toward basic and acidic residues. Residues L100–D114 show a composition bias toward acidic residues.

Belongs to the ZipA family. In terms of assembly, interacts with FtsZ via their C-terminal domains.

It localises to the cell inner membrane. Essential cell division protein that stabilizes the FtsZ protofilaments by cross-linking them and that serves as a cytoplasmic membrane anchor for the Z ring. Also required for the recruitment to the septal ring of downstream cell division proteins. The polypeptide is Cell division protein ZipA (Pseudomonas aeruginosa (strain LESB58)).